A 67-amino-acid chain; its full sequence is SPbeta prophage-derived uncharacterized protein YopZ (67 aa).

Residues 1–40 adopt a coiled-coil conformation; the sequence is MTSEMQLQAQIDVIEKENKELRRRNEELGQTVECQNKQIV. A helical transmembrane segment spans residues 44-66; that stretch reads WRLLFFASSWIVYGIVSAIKYLW.

It localises to the cell membrane. This is SPbeta prophage-derived uncharacterized protein YopZ (yopZ) from Bacillus subtilis (strain 168).